We begin with the raw amino-acid sequence, 252 residues long: Chitooligosaccharide deacetylase (252 aa).

His-125 contacts Mg(2+).

This sequence belongs to the YdjC deacetylase family. ChbG subfamily. As to quaternary structure, homodimer. It depends on Mg(2+) as a cofactor.

It is found in the cytoplasm. It carries out the reaction N,N'-diacetylchitobiose + H2O = N-acetyl-beta-D-glucosaminyl-(1-&gt;4)-D-glucosamine + acetate. It catalyses the reaction diacetylchitobiose-6'-phosphate + H2O = N'-monoacetylchitobiose-6'-phosphate + acetate. It functions in the pathway glycan degradation; chitin degradation. In terms of biological role, involved in the degradation of chitin. ChbG is essential for growth on the acetylated chitooligosaccharides chitobiose and chitotriose but is dispensable for growth on cellobiose and chitosan dimer, the deacetylated form of chitobiose. Deacetylation of chitobiose-6-P and chitotriose-6-P is necessary for both the activation of the chb promoter by the regulatory protein ChbR and the hydrolysis of phosphorylated beta-glucosides by the phospho-beta-glucosidase ChbF. Catalyzes the removal of only one acetyl group from chitobiose-6-P to yield monoacetylchitobiose-6-P, the inducer of ChbR and the substrate of ChbF. This Escherichia coli O157:H7 protein is Chitooligosaccharide deacetylase.